The sequence spans 223 residues: MEKTMSLGLVGRKVGMTRIFTAEGDSIPVTVLDVSDNRVTQIKTVETDGYTAVQVAFGSRRASRVTKPLAGHLAKAGVEAGEILKEFRIEADKAAELSNGAVIGPDLFEVGQKVDVQGVSIGKGYAGTIKRYNFGSGRASHGNSRSHNVPGSIGMAQDPGRVFPGKRMTGHMGDETVTVQNLEIARIDADRKLLLVKGAVPGAKGGKVFVTPAVKTRAVKGAK.

The disordered stretch occupies residues 137–157 (GRASHGNSRSHNVPGSIGMAQ). The residue at position 157 (glutamine 157) is an N5-methylglutamine.

The protein belongs to the universal ribosomal protein uL3 family. Part of the 50S ribosomal subunit. Forms a cluster with proteins L14 and L19. In terms of processing, methylated by PrmB.

One of the primary rRNA binding proteins, it binds directly near the 3'-end of the 23S rRNA, where it nucleates assembly of the 50S subunit. In Burkholderia pseudomallei (strain 1106a), this protein is Large ribosomal subunit protein uL3.